The sequence spans 500 residues: Galactose/methyl galactoside import ATP-binding protein MglA (500 aa).

ABC transporter domains lie at 8-243 and 257-500; these read LEME…VGRD and EMIL…AKYL. Position 40–47 (40–47) interacts with ATP; sequence GENGAGKS.

It belongs to the ABC transporter superfamily. Galactose/methyl galactoside importer (TC 3.A.1.2.3) family. In terms of assembly, the complex is composed of one ATP-binding protein (MglA), two transmembrane proteins (MglC) and a solute-binding protein (MglB).

The protein localises to the cell inner membrane. The enzyme catalyses D-galactose(out) + ATP + H2O = D-galactose(in) + ADP + phosphate + H(+). It carries out the reaction methyl beta-D-galactoside(out) + ATP + H2O = methyl beta-D-galactoside(in) + ADP + phosphate + H(+). In terms of biological role, part of the ABC transporter complex MglABC involved in galactose/methyl galactoside import. Responsible for energy coupling to the transport system. This is Galactose/methyl galactoside import ATP-binding protein MglA from Fusobacterium nucleatum subsp. nucleatum (strain ATCC 25586 / DSM 15643 / BCRC 10681 / CIP 101130 / JCM 8532 / KCTC 2640 / LMG 13131 / VPI 4355).